The sequence spans 185 residues: Elongation factor P (185 aa).

This sequence belongs to the elongation factor P family.

It localises to the cytoplasm. The protein operates within protein biosynthesis; polypeptide chain elongation. Its function is as follows. Involved in peptide bond synthesis. Stimulates efficient translation and peptide-bond synthesis on native or reconstituted 70S ribosomes in vitro. Probably functions indirectly by altering the affinity of the ribosome for aminoacyl-tRNA, thus increasing their reactivity as acceptors for peptidyl transferase. The polypeptide is Elongation factor P (Desulfovibrio desulfuricans (strain ATCC 27774 / DSM 6949 / MB)).